Reading from the N-terminus, the 845-residue chain is Krueppel homolog 1 (845 aa).

Positions 141–164 (QKQQQQQQHESITNAAPTAAPSAQ) are disordered. 8 consecutive C2H2-type zinc fingers follow at residues 194–216 (FKCD…TKSH), 271–293 (YQCN…YRTH), 299–321 (FECE…RRIH), 327–349 (YKCD…MRIH), 355–377 (HKCS…MRTH), 383–407 (YKCP…SRTH), 413–435 (YHCD…RVQH), and 441–463 (YKCT…IKGH). Disordered regions lie at residues 469–610 (DDEA…VQGQ) and 757–845 (GLRS…AKAS). Composition is skewed to low complexity over residues 474 to 491 (AAAA…SAGS), 498 to 508 (SSNSESSNHSP), and 532 to 559 (ATLS…SSMA). Residues 582 to 591 (SGVSSAQPAH) are compositionally biased toward polar residues. Low complexity predominate over residues 759–775 (RSSTESPERSSSPESDS). Basic and acidic residues predominate over residues 796 to 809 (NKGDDGQVDSEKAS). Residues 810-823 (GDGTSAAGGAASVG) show a composition bias toward low complexity.

It belongs to the krueppel C2H2-type zinc-finger protein family.

In terms of biological role, plays a general role in the hierarchies of gene expression leading to metamorphosis. This chain is Krueppel homolog 1 (Kr-h1), found in Drosophila melanogaster (Fruit fly).